The chain runs to 1642 residues: Coiled-coil domain-containing protein 7A (1642 aa).

Residues 21–51 (PYKKGLLNSSPKPKEKHNAKSKYGKNESMVL) are disordered. An LRR 1 repeat occupies 161 to 184 (VNQMEEISKDQSNLEELQSDGKTA). Positions 279–330 (LEKALNDQQTIESKYKQLETDFQMLIMEKTLLEAEIRRLREIERVKSAAKEE) form a coiled coil. One copy of the LRR 2 repeat lies at 1310-1333 (IKELSKTLNLDGGDIELSDFVFKT).

As to expression, exclusively expressed in the testes.

The polypeptide is Coiled-coil domain-containing protein 7A (Mus musculus (Mouse)).